The sequence spans 64 residues: Large ribosomal subunit protein uL29 (64 aa).

It belongs to the universal ribosomal protein uL29 family.

In Burkholderia ambifaria (strain MC40-6), this protein is Large ribosomal subunit protein uL29.